The primary structure comprises 457 residues: Probable xyloglucan 6-xylosyltransferase 5 (457 aa).

A disordered region spans residues 1-40 (MGQDGSPAHKRPSGSGGGLPTTTLTNGGGRGGRGGLLPRG). Topologically, residues 1-51 (MGQDGSPAHKRPSGSGGGLPTTTLTNGGGRGGRGGLLPRGRQMQKTFNNIK) are cytoplasmic. Residues 26–37 (NGGGRGGRGGLL) show a composition bias toward gly residues. The chain crosses the membrane as a helical; Signal-anchor for type II membrane protein span at residues 52 to 72 (ITILCGFVTILVLRGTIGVGN). At 73–457 (LGSSSADAVN…RTPVETKPQN (385 aa)) the chain is on the lumenal side. Residues 97-116 (RSDSDPTDLDEPQEGDMNPN) form a disordered region. A compositionally biased stretch (acidic residues) spans 101–110 (DPTDLDEPQE). Asn-116 and Asn-432 each carry an N-linked (GlcNAc...) asparagine glycan.

Belongs to the glycosyltransferase 34 family. As to quaternary structure, interacts with XXT2 and CSLC4. Interacts with FUT1 and XLT2. In terms of tissue distribution, highly expressed in roots, stems and cauline leaves, and at lower levels in rosette leaves, flowers and siliques.

It localises to the golgi apparatus membrane. The enzyme catalyses Transfers an alpha-D-xylosyl residue from UDP-D-xylose to a glucose residue in xyloglucan, forming an alpha-(1-&gt;6)-D-xylosyl-D-glucose linkage.. In terms of biological role, probable xyloglucan xylosyltransferase involved in the biosynthesis of xyloglucan in roots. May act in association with XXT1 and XXT2. Associates with other xyloglucan-synthesizing enzymes to form multiprotein complexes for xyloglucan synthesis in the Golgi. This chain is Probable xyloglucan 6-xylosyltransferase 5, found in Arabidopsis thaliana (Mouse-ear cress).